The following is a 261-amino-acid chain: MTKPPIGGNRTGRKLGQKVKKGKLKASSRRWLERHINDPYVQRAKLEGYRARAAFKLLEIDEKHNILKGARRIIDLGAAPGSWSQIAANVTGSTDSDIRVAAIDFLEMTQLPGVKILQLDFLDPQAPALLMEAVGGVPDVVISDMAAPTTGHQKTDHIRTMHLCEVAAYFAVEVLAEGGHFLAKTFQGGTEKDLLNMLKQNFKQVIHIKPASSRQESVEMFLLAKGFKGRRSGNALGHEVEDDGPMPHDPREDATADEDQD.

Positions 81, 83, 104, 120, and 144 each coordinate S-adenosyl-L-methionine. The active-site Proton acceptor is Lys184. Positions 233 to 261 (GNALGHEVEDDGPMPHDPREDATADEDQD) are disordered. Over residues 245–254 (PMPHDPREDA) the composition is skewed to basic and acidic residues.

It belongs to the class I-like SAM-binding methyltransferase superfamily. RNA methyltransferase RlmE family.

It localises to the cytoplasm. It catalyses the reaction uridine(2552) in 23S rRNA + S-adenosyl-L-methionine = 2'-O-methyluridine(2552) in 23S rRNA + S-adenosyl-L-homocysteine + H(+). Specifically methylates the uridine in position 2552 of 23S rRNA at the 2'-O position of the ribose in the fully assembled 50S ribosomal subunit. This is Ribosomal RNA large subunit methyltransferase E from Allorhizobium ampelinum (strain ATCC BAA-846 / DSM 112012 / S4) (Agrobacterium vitis (strain S4)).